The following is a 664-amino-acid chain: Cytoskeleton-associated protein 2 (664 aa).

A disordered region spans residues 1-38 (MAESRKRFLGRAARNPLPVTRDLQLPPTRRDQPAFREQ). Basic and acidic residues predominate over residues 28-38 (TRRDQPAFREQ). Residues 160–319 (PKQDSNVSKK…ASKDAARTDS (160 aa)) are association with alpha- and beta-tubulin. Serine 186 is subject to Phosphoserine. Disordered stretches follow at residues 254-273 (IRSLHSSSHGAAKQGLSRPL), 283-328 (LDKE…MVKP), 366-393 (GKGKGLKRPPHSVVTQAEPKGQSENPVG), and 512-545 (AHATKEPIQEVNADANVGSGKPGEENEHHGKVEV). The segment covering 300-309 (GSSQAPSRSI) has biased composition (polar residues). Basic residues predominate over residues 366 to 375 (GKGKGLKRPP). The segment covering 533 to 545 (PGEENEHHGKVEV) has biased composition (basic and acidic residues). Threonine 561 carries the post-translational modification Phosphothreonine. Serine 577 bears the Phosphoserine mark. Threonine 579 bears the Phosphothreonine mark. Serine 584 carries the post-translational modification Phosphoserine.

This sequence belongs to the CKAP2 family. In terms of assembly, associates with alpha- and beta-tubulins.

It is found in the cytoplasm. It localises to the cytoskeleton. The protein localises to the spindle. The protein resides in the spindle pole. Its function is as follows. Possesses microtubule stabilizing properties. Involved in regulating aneuploidy, cell cycling, and cell death in a p53-dependent manner. This is Cytoskeleton-associated protein 2 from Mus musculus (Mouse).